The sequence spans 415 residues: Multidrug resistance protein MdtA (415 aa).

The signal sequence occupies residues 1-21; the sequence is MKGSYKSRWVIVIVVVIAAIA. Over residues 31 to 47 the composition is skewed to polar residues; sequence DSQSAAPGATKQAQQSP. Disordered regions lie at residues 31 to 56 and 390 to 415; these read DSQS…GMRA and VVET…GARS. The segment covering 399-415 has biased composition (basic and acidic residues); the sequence is PEEKATSREYAKKGARS.

This sequence belongs to the membrane fusion protein (MFP) (TC 8.A.1) family. In terms of assembly, part of a tripartite efflux system composed of MdtA, MdtB and MdtC.

The protein localises to the cell inner membrane. In terms of biological role, the MdtABC tripartite complex confers resistance against novobiocin and deoxycholate. The chain is Multidrug resistance protein MdtA from Escherichia coli O6:H1 (strain CFT073 / ATCC 700928 / UPEC).